The chain runs to 234 residues: uncharacterized protein (234 aa).

A helical membrane pass occupies residues 13-32 (KSINYYIFFFQYTLVYNTIQ). Disordered stretches follow at residues 102–130 (HSKT…SSNS) and 159–185 (ESDS…SEYE). Low complexity predominate over residues 103-130 (SKTTSLPFSSSSPQSSSSSSSSSSSSNS). Positions 167–185 (EFDSESNSDFDSESESEYE) are enriched in acidic residues.

Its subcellular location is the membrane. This is an uncharacterized protein from Dictyostelium discoideum (Social amoeba).